Consider the following 232-residue polypeptide: Ferric nitrobindin-like protein (232 aa).

Over residues 1 to 10 (MSENETSKTG) the composition is skewed to polar residues. The tract at residues 1-33 (MSENETSKTGGNAGVPGSGADAPSLSDSPAISG) is disordered. Positions 85-91 (GVWRGEG) match the GXWXGXG motif.

Belongs to the nitrobindin family.

This chain is Ferric nitrobindin-like protein, found in Corynebacterium efficiens (strain DSM 44549 / YS-314 / AJ 12310 / JCM 11189 / NBRC 100395).